The primary structure comprises 208 residues: Guanylate kinase (208 aa).

The Guanylate kinase-like domain occupies 5 to 184; it reads GLLIVFSGPS…AAERVKCVIE (180 aa). An ATP-binding site is contributed by 12 to 19; the sequence is GPSGVGKG.

Belongs to the guanylate kinase family.

It localises to the cytoplasm. The enzyme catalyses GMP + ATP = GDP + ADP. Functionally, essential for recycling GMP and indirectly, cGMP. The protein is Guanylate kinase of Streptococcus pneumoniae (strain ATCC BAA-255 / R6).